The following is a 401-amino-acid chain: S-adenosylmethionine synthase 1 (401 aa).

Residue His-15 participates in ATP binding. Residue Asp-17 participates in Mg(2+) binding. Glu-43 serves as a coordination point for K(+). L-methionine-binding residues include Glu-56 and Gln-98. The flexible loop stretch occupies residues 98 to 108 (QSPDIAQGVDK). ATP contacts are provided by residues 173–175 (DGK), 246–247 (RF), Asp-255, 261–262 (RK), Ala-278, and Lys-282. L-methionine is bound at residue Asp-255. Lys-286 is a binding site for L-methionine.

It belongs to the AdoMet synthase family. Homotetramer; dimer of dimers. Requires Mg(2+) as cofactor. The cofactor is K(+).

It is found in the cytoplasm. It catalyses the reaction L-methionine + ATP + H2O = S-adenosyl-L-methionine + phosphate + diphosphate. It participates in amino-acid biosynthesis; S-adenosyl-L-methionine biosynthesis; S-adenosyl-L-methionine from L-methionine: step 1/1. Its function is as follows. Catalyzes the formation of S-adenosylmethionine (AdoMet) from methionine and ATP. The overall synthetic reaction is composed of two sequential steps, AdoMet formation and the subsequent tripolyphosphate hydrolysis which occurs prior to release of AdoMet from the enzyme. The protein is S-adenosylmethionine synthase 1 of Frankia casuarinae (strain DSM 45818 / CECT 9043 / HFP020203 / CcI3).